The sequence spans 262 residues: Ninja-family protein 2 (262 aa).

Positions 49–70 (RNSLACNTSKEAAGQSPKEMNA) are disordered.

The protein belongs to the Ninja family.

It localises to the nucleus. This is Ninja-family protein 2 from Zea mays (Maize).